A 295-amino-acid polypeptide reads, in one-letter code: Pyrroline-5-carboxylate reductase (295 aa).

The protein belongs to the pyrroline-5-carboxylate reductase family.

It is found in the cytoplasm. The enzyme catalyses L-proline + NADP(+) = (S)-1-pyrroline-5-carboxylate + NADPH + 2 H(+). It carries out the reaction L-proline + NAD(+) = (S)-1-pyrroline-5-carboxylate + NADH + 2 H(+). Its pathway is amino-acid biosynthesis; L-proline biosynthesis; L-proline from L-glutamate 5-semialdehyde: step 1/1. In terms of biological role, catalyzes the reduction of 1-pyrroline-5-carboxylate (PCA) to L-proline. This chain is Pyrroline-5-carboxylate reductase, found in Mycobacterium tuberculosis (strain CDC 1551 / Oshkosh).